Consider the following 37-residue polypeptide: Dolichyl-diphosphooligosaccharide--protein glycosyltransferase subunit 4B (37 aa).

Over 1–8 the chain is Lumenal; it reads MFDDQDLG. The helical transmembrane segment at 9-29 threads the bilayer; sequence FFANFLGIFIFVLVMAYHFVM. At 30-37 the chain is on the cytoplasmic side; sequence ADVKYEGN.

It belongs to the OST4 family. As to quaternary structure, component of the oligosaccharyltransferase (OST) complex.

It is found in the endoplasmic reticulum membrane. Subunit of the oligosaccharyl transferase (OST) complex that catalyzes the initial transfer of a defined glycan (Glc(3)Man(9)GlcNAc(2) in eukaryotes) from the lipid carrier dolichol-pyrophosphate to an asparagine residue within an Asn-X-Ser/Thr consensus motif in nascent polypeptide chains, the first step in protein N-glycosylation. N-glycosylation occurs cotranslationally and the complex associates with the Sec61 complex at the channel-forming translocon complex that mediates protein translocation across the endoplasmic reticulum (ER). All subunits are required for a maximal enzyme activity. The sequence is that of Dolichyl-diphosphooligosaccharide--protein glycosyltransferase subunit 4B (OST4B) from Oryza sativa subsp. japonica (Rice).